The sequence spans 123 residues: Large ribosomal subunit protein bL12 (123 aa).

It belongs to the bacterial ribosomal protein bL12 family. Homodimer. Part of the ribosomal stalk of the 50S ribosomal subunit. Forms a multimeric L10(L12)X complex, where L10 forms an elongated spine to which 2 to 4 L12 dimers bind in a sequential fashion. Binds GTP-bound translation factors.

Its function is as follows. Forms part of the ribosomal stalk which helps the ribosome interact with GTP-bound translation factors. Is thus essential for accurate translation. This is Large ribosomal subunit protein bL12 from Hydrogenovibrio crunogenus (strain DSM 25203 / XCL-2) (Thiomicrospira crunogena).